A 347-amino-acid chain; its full sequence is KRR1 small subunit processome component homolog (347 aa).

The KH domain occupies 124–194 (GCDIIKIGNL…VRDIVLETMN (71 aa)). The segment covering 231-246 (NKNLSKRKQPKVKKPK) has biased composition (basic residues). The interval 231–347 (NKNLSKRKQP…LLKANKKSKS (117 aa)) is disordered. Residues 271–304 (FLNKEQKQAKRQQERQTKQAEAAKKQDERRNKDF) are a coiled coil. Composition is skewed to basic and acidic residues over residues 272–303 (LNKE…RNKD) and 318–329 (KANDNDSSDSRV). The segment covering 337–347 (KLLKANKKSKS) has biased composition (basic residues).

Belongs to the KRR1 family. In terms of assembly, monomer. Component of the ribosomal small subunit (SSU) processome.

It localises to the nucleus. The protein localises to the nucleolus. In terms of biological role, required for 40S ribosome biogenesis. Involved in nucleolar processing of pre-18S ribosomal RNA and ribosome assembly. Binds to RNA. Required for female germline development, cell viability during eye development and for survival of dividing cells and epithelial cells during early wing disk development. The protein is KRR1 small subunit processome component homolog of Drosophila willistoni (Fruit fly).